The primary structure comprises 288 residues: Aquaporin PIP2-4 (288 aa).

Residues M1 to P24 are disordered. The next 2 helical transmembrane spans lie at A42 to I62 and C79 to V99. Residues N111–A113 carry the NPA 1 motif. 3 consecutive transmembrane segments (helical) span residues L130–F150, G172–A192, and V206–I226. The NPA 2 motif lies at N232–A234. A helical transmembrane segment spans residues I254–L274.

Belongs to the MIP/aquaporin (TC 1.A.8) family. PIP (TC 1.A.8.11) subfamily. Homomers. May interact with PIP1-2 to form heteromers. As to expression, expressed in the root growing zone at 5-6 mm from the root tip.

The protein resides in the cell membrane. In terms of biological role, water channel required to facilitate the transport of water across cell membrane. Active as homomers. Increased activity when heteromerization with PIP1-2. The chain is Aquaporin PIP2-4 (PIP2-4) from Zea mays (Maize).